A 564-amino-acid chain; its full sequence is Proline--tRNA ligase (564 aa).

Belongs to the class-II aminoacyl-tRNA synthetase family. ProS type 1 subfamily. Homodimer.

It is found in the cytoplasm. The enzyme catalyses tRNA(Pro) + L-proline + ATP = L-prolyl-tRNA(Pro) + AMP + diphosphate. Its function is as follows. Catalyzes the attachment of proline to tRNA(Pro) in a two-step reaction: proline is first activated by ATP to form Pro-AMP and then transferred to the acceptor end of tRNA(Pro). As ProRS can inadvertently accommodate and process non-cognate amino acids such as alanine and cysteine, to avoid such errors it has two additional distinct editing activities against alanine. One activity is designated as 'pretransfer' editing and involves the tRNA(Pro)-independent hydrolysis of activated Ala-AMP. The other activity is designated 'posttransfer' editing and involves deacylation of mischarged Ala-tRNA(Pro). The misacylated Cys-tRNA(Pro) is not edited by ProRS. The sequence is that of Proline--tRNA ligase from Thermosipho melanesiensis (strain DSM 12029 / CIP 104789 / BI429).